Consider the following 1261-residue polypeptide: Mediator of RNA polymerase II transcription subunit 14 (1261 aa).

The segment covering 1 to 11 has biased composition (basic and acidic residues); that stretch reads MPNGKQQHEVT. Disordered regions lie at residues 1–21, 413–435, and 1193–1220; these read MPNG…EIPH, NETA…GETE, and DNDI…ENET. A compositionally biased stretch (acidic residues) spans 417 to 427; sequence IVDDNDNDNDD. Basic and acidic residues predominate over residues 1205–1220; the sequence is QNEKENSKTTSKENET.

It belongs to the Mediator complex subunit 14 family. In terms of assembly, component of the Mediator complex.

It is found in the nucleus. Its function is as follows. Component of the Mediator complex, a coactivator involved in the regulated transcription of nearly all RNA polymerase II-dependent genes. Mediator functions as a bridge to convey information from gene-specific regulatory proteins to the basal RNA polymerase II transcription machinery. Mediator is recruited to promoters by direct interactions with regulatory proteins and serves as a scaffold for the assembly of a functional preinitiation complex with RNA polymerase II and the general transcription factors. This chain is Mediator of RNA polymerase II transcription subunit 14 (MED14), found in Candida albicans (strain SC5314 / ATCC MYA-2876) (Yeast).